Reading from the N-terminus, the 201-residue chain is Small ribosomal subunit protein uS4c (201 aa).

The S4 RNA-binding domain maps to 89-149 (MRLDNILFRL…DEQKSRALIQ (61 aa)).

This sequence belongs to the universal ribosomal protein uS4 family. As to quaternary structure, part of the 30S ribosomal subunit. Contacts protein S5. The interaction surface between S4 and S5 is involved in control of translational fidelity.

Its subcellular location is the plastid. It localises to the chloroplast. Its function is as follows. One of the primary rRNA binding proteins, it binds directly to 16S rRNA where it nucleates assembly of the body of the 30S subunit. With S5 and S12 plays an important role in translational accuracy. The chain is Small ribosomal subunit protein uS4c (rps4) from Coffea arabica (Arabian coffee).